The primary structure comprises 44 residues: MRDIKTYLSVAPVLSTLWFGALAGLLIEINRLFPDALSFPFFSF.

Residues 7–27 (YLSVAPVLSTLWFGALAGLLI) form a helical membrane-spanning segment.

The protein belongs to the PsaJ family.

The protein resides in the plastid. The protein localises to the chloroplast thylakoid membrane. May help in the organization of the PsaE and PsaF subunits. This Oryza nivara (Indian wild rice) protein is Photosystem I reaction center subunit IX.